A 248-amino-acid chain; its full sequence is Small ribosomal subunit protein uS5 (248 aa).

Residues 1 to 87 (MEDKKLSSAK…NPRFQRNNKD (87 aa)) form a disordered region. Low complexity predominate over residues 8 to 23 (SAKPATSSKPAPKAPS). The segment covering 57-87 (VAFEKRNFTSGDKTKKPTDSKNPRFQRNNKD) has biased composition (basic and acidic residues). In terms of domain architecture, S5 DRBM spans 94 to 157 (YEEKIVDIAR…KDAHNNLVEV (64 aa)).

It belongs to the universal ribosomal protein uS5 family. As to quaternary structure, part of the 30S ribosomal subunit. Contacts proteins S4 and S8.

Its function is as follows. With S4 and S12 plays an important role in translational accuracy. Functionally, located at the back of the 30S subunit body where it stabilizes the conformation of the head with respect to the body. The protein is Small ribosomal subunit protein uS5 of Mycoplasmopsis synoviae (strain 53) (Mycoplasma synoviae).